An 858-amino-acid chain; its full sequence is MQQVEGRNCLPAEVRIGLETLKRRRLERMRLTAQNNAGDGPPVPARSGGDALRTPANCGVRLHANNGTALPSRTTQNKDPFAKRRVDKFDMSSLEWIDKIEECPVYYPTKEEFEDPIGYIQKIAPVASKYGICKIVSPVSASVPAGVVLMKEQPGFKFMTRVQPLRLAKWAEDDTVTFFMSERKYTFRDYEKMANKVFAKKYSSASCLPAKYVEEEFWREIAFGKMDFVEYACDVDGSAFSSSPHDQLGKSNWNLKNFSRLSNSVLRLLQTPIPGVTDPMLYIGMLFSMFAWHVEDHYLYSINYHHCGAFKTWYGIPGDAAPGFEKVASQFVYNKDILVGEGEDAAFDVLLGKTTMFPPNVLLDHNVPVYKAVQKPGEFVITFPRSYHAGFSHGFNCGEAVNFAISDWFPLGSVASRRYALLNRTPLLAHEELLCRSAVLLSHKLLNSDPKSLNKSEHPHSQRCLKSCFVQLMRFQRNTRGLLAKMGSQIHYKPKTYPNLSCSMCRRDCYITHVLCGCNFDPVCLHHEQELRSCPCKSNQVVYVREDIQELEALSRKFEKDICLDKEISGFDSYKQAEKNEPFFEITRNLRNTEVNLIEDAFSGATAADAAKSSPATSTLTSFAQHDVPVLAEAIVCANQADQLYSTTEQTISSPLVKGTDAVGANSSSMADANNGTGSCNASAVEYSGNSDSESEIFRVKRRSGVSVKPASDAKTSNLSDQQVLRRLKKVRPEIQQHNKRPEDYGHCSVPSGRMSMKNLNSSSSCGEEHWRMKRRQLETQQDESSYSAKQKSYSYPSTSYSFRGEFVEMSRDAAAEVRPKRLKIRLPSSSTNRVVEQGSSGQRFTRDDKSLGCWPAI.

The JmjN domain maps to 103-144; it reads CPVYYPTKEEFEDPIGYIQKIAPVASKYGICKIVSPVSASVP. The JmjC domain occupies 250–420; sequence KSNWNLKNFS…LGSVASRRYA (171 aa). Positions 293, 295, and 388 each coordinate Fe cation. Over residues 737–746 the composition is skewed to basic and acidic residues; sequence QHNKRPEDYG. 2 disordered regions span residues 737–791 and 829–858; these read QHNK…SAKQ and SSST…WPAI. Residues 829 to 844 are compositionally biased toward polar residues; it reads SSSTNRVVEQGSSGQR.

It depends on Fe(2+) as a cofactor.

Its subcellular location is the nucleus. It carries out the reaction N(6),N(6),N(6)-trimethyl-L-lysyl(9)-[histone H3] + 2 2-oxoglutarate + 2 O2 = N(6)-methyl-L-lysyl(9)-[histone H3] + 2 formaldehyde + 2 succinate + 2 CO2. Functionally, histone demethylase that demethylates 'Lys-9' (H3K9me) of histone H3 with a specific activity for H3K9me3 and H3K9me2. No activity on H3K4me3, H3K9me1, H3K27me2 and H3K36me3/2. Involved in the control of floral organ development by demethylating H3K9me3 and H3K9me2 in the promoter regions of DH1 and MADS47. The 'Lys-9' demethylation of these two genes is required for induction of their expression. The polypeptide is Lysine-specific demethylase JMJ706 (JMJ706) (Oryza sativa subsp. japonica (Rice)).